A 357-amino-acid polypeptide reads, in one-letter code: Probable butyrate kinase (357 aa).

It belongs to the acetokinase family.

The protein resides in the cytoplasm. It carries out the reaction butanoate + ATP = butanoyl phosphate + ADP. This chain is Probable butyrate kinase, found in Thermotoga petrophila (strain ATCC BAA-488 / DSM 13995 / JCM 10881 / RKU-1).